The sequence spans 209 residues: Ion-translocating oxidoreductase complex subunit G (209 aa).

The Cytoplasmic portion of the chain corresponds to M1 to N8. Residues G9–L29 traverse the membrane as a helical segment. At T30–Q209 the chain is on the periplasmic side. T175 is modified (FMN phosphoryl threonine).

It belongs to the RnfG family. In terms of assembly, the complex is composed of six subunits: RnfA, RnfB, RnfC, RnfD, RnfE and RnfG. It depends on FMN as a cofactor.

The protein localises to the cell inner membrane. Functionally, part of a membrane-bound complex that couples electron transfer with translocation of ions across the membrane. The sequence is that of Ion-translocating oxidoreductase complex subunit G from Vibrio cholerae serotype O1 (strain ATCC 39541 / Classical Ogawa 395 / O395).